A 392-amino-acid polypeptide reads, in one-letter code: Phosphoglycerate kinase (392 aa).

Substrate is bound by residues 21–23 (DMN), Arg-36, 59–62 (HLGR), Arg-114, and Arg-147. Residues Lys-198, Glu-320, and 346 to 349 (GGDT) each bind ATP.

Belongs to the phosphoglycerate kinase family. Monomer.

It localises to the cytoplasm. The catalysed reaction is (2R)-3-phosphoglycerate + ATP = (2R)-3-phospho-glyceroyl phosphate + ADP. It functions in the pathway carbohydrate degradation; glycolysis; pyruvate from D-glyceraldehyde 3-phosphate: step 2/5. This chain is Phosphoglycerate kinase, found in Neisseria meningitidis serogroup C (strain 053442).